The primary structure comprises 363 residues: D-xylulose reductase (363 aa).

Residues cysteine 41, histidine 66, and glutamate 159 each coordinate Zn(2+). 183-188 (GAGPVG) contacts NAD(+).

This sequence belongs to the zinc-containing alcohol dehydrogenase family. The cofactor is Zn(2+).

It carries out the reaction xylitol + NAD(+) = D-xylulose + NADH + H(+). It participates in carbohydrate degradation; L-arabinose degradation via L-arabinitol; D-xylulose 5-phosphate from L-arabinose (fungal route): step 4/5. The sequence is that of D-xylulose reductase (XYL2) from Scheffersomyces stipitis (strain ATCC 58785 / CBS 6054 / NBRC 10063 / NRRL Y-11545) (Yeast).